Here is a 572-residue protein sequence, read N- to C-terminus: Transcription factor E3 (572 aa).

At serine 47 the chain carries Phosphoserine; by MTOR. Over residues 87–125 (TTPATLSASSSAGGSRTPAMSSSSSRVLLRQQLMRAQAQ) the composition is skewed to low complexity. The disordered stretch occupies residues 87-152 (TTPATLSASS…SPAPASPAIS (66 aa)). Positions 126–135 (EQERRERREQ) are enriched in basic and acidic residues. At arginine 187 the chain carries Asymmetric dimethylarginine. The disordered stretch occupies residues 210 to 248 (LASQALTPPPGPSSAQPLPAPETAHATGPTGSAPNSPMA). The segment at 259 to 270 (EIDDVIDEIISL) is strong transcription activation domain. The residue at position 320 (serine 320) is a Phosphoserine; by MTOR. Lysine 338 is covalently cross-linked (Glycyl lysine isopeptide (Lys-Gly) (interchain with G-Cter in SUMO2)). One can recognise a bHLH domain in the interval 345-398 (QKKDNHNLIERRRRFNINDRIKELGTLIPKSNDPEMRWNKGTILKASVDYIRKL). Positions 355–358 (RRRR) match the Nuclear localization signal motif. The segment at 408-429 (LESRQRSLEQANRSLQLRIQEL) is leucine-zipper. Disordered stretches follow at residues 439–495 (PVPP…APPS) and 530–572 (VGGL…EEES). The span at 446–457 (LLSLTTSSVSDS) shows a compositional bias: low complexity. Serine 539, serine 545, serine 551, serine 553, serine 557, and serine 565 each carry phosphoserine. Over residues 543-572 (AASDPLLSSVSPAVSKASSRRSSFSMEEES) the composition is skewed to low complexity.

It belongs to the MiT/TFE family. Homodimer and heterodimer; with TFEB or MITF. Interacts with RRAGC/RagC GDP-bound and RRAGD/RagD GDP-bound; promoting its recruitment to lysosomal membrane in the presence of nutrients. Interacts with TSC22D1; the interaction is enhanced in the presence of TGF-beta. In terms of processing, sumoylated; does not affect dimerization with MITF. Phosphorylation ar Ser-47 and Ser-320 by MTOR via non-canonical mTORC1 pathway regulates its stability and subcellular location, respectively. When nutrients are present, phosphorylation by MTOR at Ser-47 promotes ubiquitination by the SCF(BTRC) complex, followed by degradation. When nutrients are present, phosphorylation by MTOR at Ser-320 also promotes association with 14-3-3/YWHA adapters and retention in the cytosol. Phosphorylation at Ser-47 plays a more critical role than phosphorylation at Ser-320 for TFE3 inactivation. Inhibition of mTORC1, starvation and lysosomal disruption, promotes dephosphorylation and transcription factor activity. Post-translationally, ubiquitinated by the SCF(BTRC) and SCF(FBXW11) complexes following phosphorylation at Ser-47 by MTOR, leading to its degradation by the proteasome. In terms of tissue distribution, widely expressed.

Its subcellular location is the cytoplasm. It localises to the cytosol. The protein localises to the nucleus. The protein resides in the lysosome membrane. Transcription factor that acts as a master regulator of lysosomal biogenesis and immune response. Specifically recognizes and binds E-box sequences (5'-CANNTG-3'); efficient DNA-binding requires dimerization with itself or with another MiT/TFE family member such as TFEB or MITF. Involved in the cellular response to amino acid availability by acting downstream of MTOR: in the presence of nutrients, TFE3 phosphorylation by MTOR promotes its inactivation. Upon starvation or lysosomal stress, inhibition of MTOR induces TFE3 dephosphorylation, resulting in transcription factor activity. Specifically recognizes and binds the CLEAR-box sequence (5'-GTCACGTGAC-3') present in the regulatory region of many lysosomal genes, leading to activate their expression, thereby playing a central role in expression of lysosomal genes. Maintains the pluripotent state of embryonic stem cells by promoting the expression of genes such as ESRRB; mTOR-dependent TFE3 cytosolic retention and inactivation promotes exit from pluripotency. Required to maintain the naive pluripotent state of hematopoietic stem cell; mTOR-dependent cytoplasmic retention of TFE3 promotes the exit of hematopoietic stem cell from pluripotency. TFE3 activity is also involved in the inhibition of neuronal progenitor differentiation. Acts as a positive regulator of browning of adipose tissue by promoting expression of target genes; mTOR-dependent phosphorylation promotes cytoplasmic retention of TFE3 and inhibits browning of adipose tissue. In association with TFEB, activates the expression of CD40L in T-cells, thereby playing a role in T-cell-dependent antibody responses in activated CD4(+) T-cells and thymus-dependent humoral immunity. Specifically recognizes the MUE3 box, a subset of E-boxes, present in the immunoglobulin enhancer. It also binds very well to a USF/MLTF site. Promotes TGF-beta-induced transcription of COL1A2; via its interaction with TSC22D1 at E-boxes in the gene proximal promoter. May regulate lysosomal positioning in response to nutrient deprivation by promoting the expression of PIP4P1. This is Transcription factor E3 from Mus musculus (Mouse).